The following is a 159-amino-acid chain: Small ribosomal subunit protein uS7c (159 aa).

The protein belongs to the universal ribosomal protein uS7 family. Part of the 30S ribosomal subunit.

It is found in the plastid. The protein resides in the chloroplast. Its function is as follows. One of the primary rRNA binding proteins, it binds directly to 16S rRNA where it nucleates assembly of the head domain of the 30S subunit. This chain is Small ribosomal subunit protein uS7c (rps7), found in Bigelowiella natans (Pedinomonas minutissima).